The sequence spans 365 residues: NAD(P)H-quinone oxidoreductase subunit 1, chloroplastic (365 aa).

The next 8 membrane-spanning stretches (helical) occupy residues 27-47, 98-118, 129-149, 165-185, 203-223, 253-273, 302-322, and 345-365; these read VWIF…VLVI, FSIG…VIPF, IGIF…LMSG, AAQS…ISLL, FWGW…ISSL, FGLF…FVTI, IFGT…FLFI, and FLLP…LFSL.

It belongs to the complex I subunit 1 family. NDH is composed of at least 16 different subunits, 5 of which are encoded in the nucleus.

It is found in the plastid. The protein localises to the chloroplast thylakoid membrane. It catalyses the reaction a plastoquinone + NADH + (n+1) H(+)(in) = a plastoquinol + NAD(+) + n H(+)(out). It carries out the reaction a plastoquinone + NADPH + (n+1) H(+)(in) = a plastoquinol + NADP(+) + n H(+)(out). In terms of biological role, NDH shuttles electrons from NAD(P)H:plastoquinone, via FMN and iron-sulfur (Fe-S) centers, to quinones in the photosynthetic chain and possibly in a chloroplast respiratory chain. The immediate electron acceptor for the enzyme in this species is believed to be plastoquinone. Couples the redox reaction to proton translocation, and thus conserves the redox energy in a proton gradient. The chain is NAD(P)H-quinone oxidoreductase subunit 1, chloroplastic from Arabis hirsuta (Hairy rock-cress).